A 289-amino-acid polypeptide reads, in one-letter code: Bifunctional aminodeoxychorismate lyase / D-amino acid transaminase (289 aa).

Residue Arg-50 coordinates pyridoxal 5'-phosphate. Residue Lys-149 is modified to N6-(pyridoxal phosphate)lysine. Residues Tyr-153, Thr-216, and Thr-217 each contribute to the pyridoxal 5'-phosphate site. Residue Ser-252 coordinates 2-oxoglutarate. Residue Ser-253 participates in pyridoxal 5'-phosphate binding. 2 residues coordinate 2-oxoglutarate: Met-254 and Thr-255.

Belongs to the class-IV pyridoxal-phosphate-dependent aminotransferase family. As to quaternary structure, homodimer. Requires pyridoxal 5'-phosphate as cofactor.

The enzyme catalyses 4-amino-4-deoxychorismate = 4-aminobenzoate + pyruvate + H(+). The catalysed reaction is D-alanine + 2-oxoglutarate = D-glutamate + pyruvate. It functions in the pathway cofactor biosynthesis; tetrahydrofolate biosynthesis; 4-aminobenzoate from chorismate: step 2/2. Its pathway is cell wall biogenesis; peptidoglycan biosynthesis. Functionally, bifunctional enzyme that catalyzes two enzymatic reactions in biochemically unrelated pathways: acts as an aminodeoxychorismate (ADC) lyase (ADCL) in folate biosynthesis, converting 4-amino-4-deoxychorismate (ADC) to 4-aminobenzoate (PABA), and as a D-amino acid transaminase (DAAT) in peptidoglycan (PG) biosynthesis. DAAT activity is strictly restricted to D-alanine and D-glutamate. May function as a metabolic toggle that alternates between ADCL and DAAT activity, prioritizing the former over the latter in response to substrate accumulation. Bifunctionality of this enzyme provides a failsafe mechanism for a metabolic coupling between nucleic acid and cell wall biosynthesis that appears to ensure prioritization of PABA production over D-alanine/D-glutamate biosynthesis. The chain is Bifunctional aminodeoxychorismate lyase / D-amino acid transaminase from Mycobacterium tuberculosis (strain ATCC 25618 / H37Rv).